The sequence spans 358 residues: Pyruvate dehydrogenase E1 component subunit alpha (358 aa).

As to quaternary structure, heterodimer of an alpha and a beta chain. The cofactor is thiamine diphosphate.

It catalyses the reaction N(6)-[(R)-lipoyl]-L-lysyl-[protein] + pyruvate + H(+) = N(6)-[(R)-S(8)-acetyldihydrolipoyl]-L-lysyl-[protein] + CO2. The pyruvate dehydrogenase complex catalyzes the overall conversion of pyruvate to acetyl-CoA and CO(2). It contains multiple copies of three enzymatic components: pyruvate dehydrogenase (E1), dihydrolipoamide acetyltransferase (E2) and lipoamide dehydrogenase (E3). The polypeptide is Pyruvate dehydrogenase E1 component subunit alpha (pdhA) (Mycoplasma pneumoniae (strain ATCC 29342 / M129 / Subtype 1) (Mycoplasmoides pneumoniae)).